Reading from the N-terminus, the 359-residue chain is Nicotinate-nucleotide--dimethylbenzimidazole phosphoribosyltransferase (359 aa).

Glu-318 acts as the Proton acceptor in catalysis.

This sequence belongs to the CobT family. As to quaternary structure, homodimer.

It carries out the reaction 5,6-dimethylbenzimidazole + nicotinate beta-D-ribonucleotide = alpha-ribazole 5'-phosphate + nicotinate + H(+). Its pathway is nucleoside biosynthesis; alpha-ribazole biosynthesis; alpha-ribazole from 5,6-dimethylbenzimidazole: step 1/2. Its function is as follows. Catalyzes the synthesis of alpha-ribazole-5'-phosphate from nicotinate mononucleotide (NAMN) and 5,6-dimethylbenzimidazole (DMB). This is Nicotinate-nucleotide--dimethylbenzimidazole phosphoribosyltransferase from Escherichia coli O9:H4 (strain HS).